Consider the following 165-residue polypeptide: Transcription antitermination protein NusB (165 aa).

Residues 1–20 (MSDVENGGEPRQPSVKPANQ) are disordered.

This sequence belongs to the NusB family.

In terms of biological role, involved in transcription antitermination. Required for transcription of ribosomal RNA (rRNA) genes. Binds specifically to the boxA antiterminator sequence of the ribosomal RNA (rrn) operons. The protein is Transcription antitermination protein NusB of Agrobacterium fabrum (strain C58 / ATCC 33970) (Agrobacterium tumefaciens (strain C58)).